The primary structure comprises 190 residues: Peptidyl-tRNA hydrolase (190 aa).

A tRNA-binding site is contributed by tyrosine 14. The Proton acceptor role is filled by histidine 19. TRNA is bound by residues tyrosine 64, asparagine 66, and asparagine 112.

Belongs to the PTH family. As to quaternary structure, monomer.

It is found in the cytoplasm. It catalyses the reaction an N-acyl-L-alpha-aminoacyl-tRNA + H2O = an N-acyl-L-amino acid + a tRNA + H(+). In terms of biological role, hydrolyzes ribosome-free peptidyl-tRNAs (with 1 or more amino acids incorporated), which drop off the ribosome during protein synthesis, or as a result of ribosome stalling. Functionally, catalyzes the release of premature peptidyl moieties from peptidyl-tRNA molecules trapped in stalled 50S ribosomal subunits, and thus maintains levels of free tRNAs and 50S ribosomes. This Chlorobium phaeovibrioides (strain DSM 265 / 1930) (Prosthecochloris vibrioformis (strain DSM 265)) protein is Peptidyl-tRNA hydrolase.